The sequence spans 709 residues: Golgin-84 (709 aa).

Topologically, residues 1–664 are cytoplasmic; it reads MASWLKVAED…RATRFLWRHP (664 aa). Disordered regions lie at residues 24–132, 144–195, and 211–265; these read TELS…VVDR, EVEV…NQDA, and EVIH…DQLE. The segment covering 29-43 has biased composition (low complexity); it reads EQSSPQPSGSSSQEG. The span at 78–89 shows a compositional bias: basic and acidic residues; it reads PPRERIKIEKIR. Positions 94–113 are enriched in low complexity; it reads VDSSSVDASASKPDVSSSDV. Over residues 114-132 the composition is skewed to basic and acidic residues; the sequence is KGLDDDGGAEKEEKVVVDR. Residues 162–180 are compositionally biased toward low complexity; sequence DGAADSGNSEGAAESSAPS. Basic and acidic residues-rich tracts occupy residues 211-222 and 248-265; these read EVIHEKNIKEVP and QQEHKLDSGSVKDQDQLE. The stretch at 287–592 forms a coiled coil; the sequence is RVCAGLSSRL…AALEFQLEKS (306 aa). The helical; Signal-anchor for type II membrane protein transmembrane segment at 665-684 threads the bilayer; sequence VARVSLLFYLVFVHLFLMYL. Over 685 to 707 the chain is Lumenal; the sequence is MHRLQDFASREGPTAMGGLANSD.

It is found in the golgi apparatus membrane. May be involved in maintaining Golgi structure and in intra-Golgi transport. This chain is Golgin-84, found in Oryza sativa subsp. japonica (Rice).